A 272-amino-acid chain; its full sequence is Tryptophan synthase alpha chain (272 aa).

Catalysis depends on proton acceptor residues Glu60 and Asp71.

It belongs to the TrpA family. In terms of assembly, tetramer of two alpha and two beta chains.

The enzyme catalyses (1S,2R)-1-C-(indol-3-yl)glycerol 3-phosphate + L-serine = D-glyceraldehyde 3-phosphate + L-tryptophan + H2O. Its pathway is amino-acid biosynthesis; L-tryptophan biosynthesis; L-tryptophan from chorismate: step 5/5. In terms of biological role, the alpha subunit is responsible for the aldol cleavage of indoleglycerol phosphate to indole and glyceraldehyde 3-phosphate. The polypeptide is Tryptophan synthase alpha chain (Methanosarcina acetivorans (strain ATCC 35395 / DSM 2834 / JCM 12185 / C2A)).